The sequence spans 103 residues: Large ribosomal subunit protein bL21 (103 aa).

The protein belongs to the bacterial ribosomal protein bL21 family. As to quaternary structure, part of the 50S ribosomal subunit. Contacts protein L20.

In terms of biological role, this protein binds to 23S rRNA in the presence of protein L20. This Yersinia enterocolitica serotype O:8 / biotype 1B (strain NCTC 13174 / 8081) protein is Large ribosomal subunit protein bL21.